We begin with the raw amino-acid sequence, 380 residues long: Queuine tRNA-ribosyltransferase (380 aa).

Asp-96 serves as the catalytic Proton acceptor. Residues Asp-96–Phe-100, Asp-150, Gln-193, and Gly-220 contribute to the substrate site. Residues Gly-251–Ser-257 form an RNA binding region. The active-site Nucleophile is the Asp-270. The RNA binding; important for wobble base 34 recognition stretch occupies residues Thr-275–Arg-279. Residues Cys-308, Cys-310, Cys-313, and His-339 each coordinate Zn(2+).

Belongs to the queuine tRNA-ribosyltransferase family. In terms of assembly, homodimer. Within each dimer, one monomer is responsible for RNA recognition and catalysis, while the other monomer binds to the replacement base PreQ1. Zn(2+) serves as cofactor.

The enzyme catalyses 7-aminomethyl-7-carbaguanine + guanosine(34) in tRNA = 7-aminomethyl-7-carbaguanosine(34) in tRNA + guanine. It functions in the pathway tRNA modification; tRNA-queuosine biosynthesis. Its function is as follows. Catalyzes the base-exchange of a guanine (G) residue with the queuine precursor 7-aminomethyl-7-deazaguanine (PreQ1) at position 34 (anticodon wobble position) in tRNAs with GU(N) anticodons (tRNA-Asp, -Asn, -His and -Tyr). Catalysis occurs through a double-displacement mechanism. The nucleophile active site attacks the C1' of nucleotide 34 to detach the guanine base from the RNA, forming a covalent enzyme-RNA intermediate. The proton acceptor active site deprotonates the incoming PreQ1, allowing a nucleophilic attack on the C1' of the ribose to form the product. After dissociation, two additional enzymatic reactions on the tRNA convert PreQ1 to queuine (Q), resulting in the hypermodified nucleoside queuosine (7-(((4,5-cis-dihydroxy-2-cyclopenten-1-yl)amino)methyl)-7-deazaguanosine). The polypeptide is Queuine tRNA-ribosyltransferase (Streptococcus suis (strain 98HAH33)).